The sequence spans 134 residues: D-ribose pyranase (134 aa).

Catalysis depends on histidine 20, which acts as the Proton donor. Residues aspartate 28, histidine 101, and 123–125 (YCN) contribute to the substrate site.

It belongs to the RbsD / FucU family. RbsD subfamily. In terms of assembly, homodecamer.

The protein localises to the cytoplasm. It carries out the reaction beta-D-ribopyranose = beta-D-ribofuranose. Its pathway is carbohydrate metabolism; D-ribose degradation; D-ribose 5-phosphate from beta-D-ribopyranose: step 1/2. Functionally, catalyzes the interconversion of beta-pyran and beta-furan forms of D-ribose. The polypeptide is D-ribose pyranase (Pseudomonas fluorescens (strain SBW25)).